Consider the following 304-residue polypeptide: ATP synthase gamma chain (304 aa).

Belongs to the ATPase gamma chain family. F-type ATPases have 2 components, CF(1) - the catalytic core - and CF(0) - the membrane proton channel. CF(1) has five subunits: alpha(3), beta(3), gamma(1), delta(1), epsilon(1). CF(0) has three main subunits: a, b and c.

The protein resides in the cell membrane. Produces ATP from ADP in the presence of a proton gradient across the membrane. The gamma chain is believed to be important in regulating ATPase activity and the flow of protons through the CF(0) complex. This is ATP synthase gamma chain from Mycobacterium ulcerans (strain Agy99).